The primary structure comprises 239 residues: Carboxy-S-adenosyl-L-methionine synthase (239 aa).

S-adenosyl-L-methionine-binding positions include Tyr35, 64–66 (GCS), 88–89 (DN), and Arg195.

It belongs to the class I-like SAM-binding methyltransferase superfamily. Cx-SAM synthase family. Homodimer.

It carries out the reaction prephenate + S-adenosyl-L-methionine = carboxy-S-adenosyl-L-methionine + 3-phenylpyruvate + H2O. Catalyzes the conversion of S-adenosyl-L-methionine (SAM) to carboxy-S-adenosyl-L-methionine (Cx-SAM). This chain is Carboxy-S-adenosyl-L-methionine synthase, found in Helicobacter pylori (strain G27).